Consider the following 382-residue polypeptide: tRNA(Met) cytidine acetate ligase (382 aa).

Residues 7 to 20 (ITEY…HVYH), Gly100, Asn153, and Arg178 contribute to the ATP site.

This sequence belongs to the TmcAL family.

The protein localises to the cytoplasm. It carries out the reaction cytidine(34) in elongator tRNA(Met) + acetate + ATP = N(4)-acetylcytidine(34) in elongator tRNA(Met) + AMP + diphosphate. Functionally, catalyzes the formation of N(4)-acetylcytidine (ac(4)C) at the wobble position of elongator tRNA(Met), using acetate and ATP as substrates. First activates an acetate ion to form acetyladenylate (Ac-AMP) and then transfers the acetyl group to tRNA to form ac(4)C34. The chain is tRNA(Met) cytidine acetate ligase from Staphylococcus carnosus (strain TM300).